The chain runs to 779 residues: Neutral ceramidase 1 (779 aa).

Catalysis depends on Ser350, which acts as the Nucleophile. Asn368, Asn432, and Asn667 each carry an N-linked (GlcNAc...) asparagine glycan.

It belongs to the neutral ceramidase family. In terms of tissue distribution, mostly expressed in stems, leaves, roots and siliques, and, to a lower extent, in flowers.

Its subcellular location is the secreted. The protein localises to the endoplasmic reticulum. It is found in the golgi apparatus. The enzyme catalyses an N-acylsphing-4-enine + H2O = sphing-4-enine + a fatty acid. Functionally, hydrolyzes the sphingolipid ceramide into sphingosine and free fatty acid. Regulates sphingolipid homeostasis. Promotes oxidative stress resistance. This Arabidopsis thaliana (Mouse-ear cress) protein is Neutral ceramidase 1.